The chain runs to 38 residues: AQTVEVKMGADGGLLVFEPAKAGPHNVVFDEDNIPPGV.

Residues 1–38 form the Plastocyanin-like domain; that stretch reads AQTVEVKMGADGGLLVFEPAKAGPHNVVFDEDNIPPGV. Residue His-25 coordinates Cu cation.

Belongs to the plastocyanin family. Requires Cu(2+) as cofactor.

The protein resides in the plastid. It localises to the chloroplast thylakoid membrane. Functionally, participates in electron transfer between P700 and the cytochrome b6-f complex in photosystem I. In Thalassiosira oceanica (Marine diatom), this protein is Plastocyanin (PETE).